Reading from the N-terminus, the 1373-residue chain is DNA-directed RNA polymerase subunit beta (1373 aa).

This sequence belongs to the RNA polymerase beta chain family. The RNAP catalytic core consists of 2 alpha, 1 beta, 1 beta' and 1 omega subunit. When a sigma factor is associated with the core the holoenzyme is formed, which can initiate transcription.

The catalysed reaction is RNA(n) + a ribonucleoside 5'-triphosphate = RNA(n+1) + diphosphate. Functionally, DNA-dependent RNA polymerase catalyzes the transcription of DNA into RNA using the four ribonucleoside triphosphates as substrates. The sequence is that of DNA-directed RNA polymerase subunit beta from Rickettsia conorii (strain ATCC VR-613 / Malish 7).